The sequence spans 518 residues: Equilibrative nucleoside transporter 4 (518 aa).

Over residues methionine 1 to lysine 10 the composition is skewed to basic and acidic residues. The tract at residues methionine 1–asparagine 21 is disordered. Residues methionine 1–histidine 66 lie on the Extracellular side of the membrane. The helical transmembrane segment at glycine 67 to isoleucine 87 threads the bilayer. Residues threonine 88–glycine 99 lie on the Cytoplasmic side of the membrane. The chain crosses the membrane as a helical span at residues threonine 100–leucine 120. The Extracellular portion of the chain corresponds to asparagine 121 to arginine 133. A helical membrane pass occupies residues isoleucine 134–tryptophan 154. Topologically, residues leucine 155–arginine 157 are cytoplasmic. The chain crosses the membrane as a helical span at residues phenylalanine 158–cysteine 178. Residues threonine 179–glutamine 198 are Extracellular-facing. Residues glycine 199–threonine 218 form a helical membrane-spanning segment. Over lysine 219 to threonine 229 the chain is Cytoplasmic. A helical membrane pass occupies residues isoleucine 230–valine 250. Residues arginine 251–arginine 342 are Extracellular-facing. A helical membrane pass occupies residues valine 343–proline 363. The Cytoplasmic portion of the chain corresponds to glycine 364–glutamate 376. Residues tryptophan 377–alanine 397 traverse the membrane as a helical segment. The Extracellular portion of the chain corresponds to alanine 398 to arginine 407. Residues leucine 408–proline 428 form a helical membrane-spanning segment. The Cytoplasmic portion of the chain corresponds to alanine 429–tryptophan 439. The helical transmembrane segment at proline 440–isoleucine 460 threads the bilayer. Residues histidine 461 to asparagine 476 are Extracellular-facing. Residues isoleucine 477–tyrosine 497 traverse the membrane as a helical segment. At serine 498–tyrosine 518 the chain is on the cytoplasmic side.

It belongs to the SLC29A/ENT transporter (TC 2.A.57) family.

The protein resides in the membrane. Its function is as follows. Functions as a polyspecific organic cation transporter, efficiently transporting many organic cations such as monoamine neurotransmitters 1-methyl-4-phenylpyridinium and biogenic amines including serotonin, dopamine, norepinephrine and epinephrine. May play a role in regulating central nervous system homeostasis of monoamine neurotransmitters. May be involved in luminal transport of organic cations in the kidney and seems to use luminal proton gradient to drive organic cation reabsorption. Does not seem to transport nucleoside and nucleoside analogs such as uridine, cytidine, thymidine, adenosine, inosine, guanosine, and azidothymidine. This chain is Equilibrative nucleoside transporter 4 (slc29a4), found in Danio rerio (Zebrafish).